The chain runs to 1223 residues: MGRMKKIFFNQKSDLNSMKLFFCNRIMNKGEIRRIIAWFLFNHGTSRTAHMVDRLKILGFYHATKAGISLSIDDLSIPPTKKWLLEDAEQEIAKTQKNYSIGKITAVERFQKVIDTWHSTSETLKNEVVQYFEQTNPLNPVYMMAFSGARGNLSQVSQLVGMRGLMSDPQGQIIDLPIRSNFREGLTVTEYVISCYGARKGLVDTALRTADSGYLTRRLVDVAQDMIIRETDCGTKSGILLGPVKDEQKVVFSLQERLIGRVLAENIYSPKQKQYIAKKNQDISASLSDKICEIKRTNILVRSPLTCKSIRSVCQLCYGWSLAHGNLVDLGEAVGIIAAQSIGEPGTQLTMRTFHTGGVFTGNIAKQIRSSIDGKIIYSLTNTIPMRTRHGEIALITQSNINICIQGKNKEFNIEVPINTILLVNNGSMVRAKQLIAEVSAPVNAQSVEIASKYVASDFSGEIHFENLLLQEKKSAYGHKMNRAGQYGGLLWILSGQVYKFSLDVPLMFDTADYIHNGSCMAEHNIISQYGGILQTSENNLTIDNSNSYLYVLNSSMTIINAYLSHIKNARSEAYILTDDLNQKFFMQVESNNVIKNNQIIAKFVTKTYLTNTGGILKYSSEIEVDEYDIVTQSYPVRKGGIIMWIPEETHLINKDASLLMVRDCEYVEAGTQIIKDLICHSSGLAQVSQTNDILREVVIKPGKIYRPIDFSQVLDKHQTLIQAGEEICDGIIAEELVYLENVNLSSGSALLIRPVVQFLIPNSTELKKLEAQYQLKQNISIQPSIHICYKDGQRIHAWQSMEIAKIFLRLEIDSHLHKLNVTLNLIENKLLQIKMFEYLMIDLNQIIDFQSYQNVTRLVRKFNNYIIPGTILAKTEIIAKDHGEVRQSNKNFEEQKSFLIMNEHDQMTLFVKNAYEFFQLGDLVHKGKEIVPGILAPQSGQVIQLQANRVTLRLARPYLVSSEAVLYVDDGDFVKSGDTLVMLIFEQSKTGDIVQGLPRIEELLEARRTKGLKPLPNNLHDLLQSFFDEATEKYGIQKAAKKSFEKLQLFLVNEVQSVYKAQGVHISDKHIEVIVRQMTSKVMIEEGGDTTLLPGELIELHRIENMNRNVSVHAKYKPIVLGITKASLNTESFISAASFQETTRVLTKAAIEGKTDWLRGLKENVIIGRLIPAGTGFNVHDKMYSRDLSLSNSYNLAYSSNSQHKRIEQKNAEYNFEDIIFD.

Zn(2+) contacts are provided by Cys-233, Cys-307, Cys-314, and Cys-317.

This sequence belongs to the RNA polymerase beta' chain family. RpoC2 subfamily. In terms of assembly, in plastids the minimal PEP RNA polymerase catalytic core is composed of four subunits: alpha, beta, beta', and beta''. When a (nuclear-encoded) sigma factor is associated with the core the holoenzyme is formed, which can initiate transcription. Zn(2+) is required as a cofactor.

Its subcellular location is the plastid. It localises to the chloroplast. The catalysed reaction is RNA(n) + a ribonucleoside 5'-triphosphate = RNA(n+1) + diphosphate. Its function is as follows. DNA-dependent RNA polymerase catalyzes the transcription of DNA into RNA using the four ribonucleoside triphosphates as substrates. This is DNA-directed RNA polymerase subunit beta'' from Mesostigma viride (Green alga).